Reading from the N-terminus, the 291-residue chain is Mitochondrial citrate transporter B (291 aa).

3 Solcar repeats span residues 10–97 (PQKW…IKNS), 105–193 (LSPA…LKES), and 201–283 (PTLF…MTYL). 6 helical membrane-spanning segments follow: residues 16-36 (LIAG…FEYA), 74-94 (STLI…YDTI), 112-132 (VAGV…TERI), 172-192 (TTLK…ILKE), 203-220 (LFTT…TVYA), and 255-276 (FWKG…VFSV).

This sequence belongs to the mitochondrial carrier (TC 2.A.29) family.

The protein resides in the mitochondrion inner membrane. The enzyme catalyses citrate(in) + H(+)(in) = citrate(out) + H(+)(out). Its function is as follows. Mitochondrial transporter that mediates citrate export from mitochondria to cytoplasm. Both ctpA, ctpB, and ctpD play important roles in citric acid transport across the mitochondrial membrane and function in a redundant manner. The protein is Mitochondrial citrate transporter B of Aspergillus niger (strain ATCC 1015 / CBS 113.46 / FGSC A1144 / LSHB Ac4 / NCTC 3858a / NRRL 328 / USDA 3528.7).